We begin with the raw amino-acid sequence, 152 residues long: Dimethylsulfoniopropionate lyase DddW (152 aa).

The 56-residue stretch at 69–124 folds into the Cupin type-2 domain; sequence IAEFGPGHQLRPHRHTPPEFYLGLEGSGIVTIDGVPHEIRAGVALYIPGDAEHGTV. His83, Glu87, Tyr89, and His121 together coordinate Fe cation.

This sequence belongs to the non-heme iron-dependent dioxygenase family. In terms of assembly, homodimer. Fe(2+) serves as cofactor.

It carries out the reaction S,S-dimethyl-beta-propiothetin = acrylate + dimethyl sulfide + H(+). In terms of biological role, able to cleave dimethylsulfoniopropionate (DMSP), releasing dimethyl sulfide (DMS) and acrylate. DMS is the principal form by which sulfur is transported from oceans to the atmosphere. In Ruegeria pomeroyi (strain ATCC 700808 / DSM 15171 / DSS-3) (Silicibacter pomeroyi), this protein is Dimethylsulfoniopropionate lyase DddW.